The following is a 480-amino-acid chain: Proline--tRNA ligase (480 aa).

Belongs to the class-II aminoacyl-tRNA synthetase family. ProS type 3 subfamily. Homodimer.

The protein localises to the cytoplasm. The enzyme catalyses tRNA(Pro) + L-proline + ATP = L-prolyl-tRNA(Pro) + AMP + diphosphate. In terms of biological role, catalyzes the attachment of proline to tRNA(Pro) in a two-step reaction: proline is first activated by ATP to form Pro-AMP and then transferred to the acceptor end of tRNA(Pro). This Metallosphaera sedula (strain ATCC 51363 / DSM 5348 / JCM 9185 / NBRC 15509 / TH2) protein is Proline--tRNA ligase.